The chain runs to 349 residues: Ferredoxin--NADP reductase 1 (349 aa).

FAD is bound by residues E36, K44, Y48, V88, L123, D290, and S331.

This sequence belongs to the ferredoxin--NADP reductase type 2 family. Homodimer. FAD serves as cofactor.

It carries out the reaction 2 reduced [2Fe-2S]-[ferredoxin] + NADP(+) + H(+) = 2 oxidized [2Fe-2S]-[ferredoxin] + NADPH. In Bacillus cereus (strain ATCC 10987 / NRS 248), this protein is Ferredoxin--NADP reductase 1.